A 375-amino-acid polypeptide reads, in one-letter code: Succinyl-diaminopimelate desuccinylase (375 aa).

His66 is a Zn(2+) binding site. Asp68 is an active-site residue. Asp99 contacts Zn(2+). Glu133 acts as the Proton acceptor in catalysis. Positions 134, 162, and 348 each coordinate Zn(2+).

The protein belongs to the peptidase M20A family. DapE subfamily. As to quaternary structure, homodimer. The cofactor is Zn(2+). Co(2+) serves as cofactor.

The catalysed reaction is N-succinyl-(2S,6S)-2,6-diaminopimelate + H2O = (2S,6S)-2,6-diaminopimelate + succinate. The protein operates within amino-acid biosynthesis; L-lysine biosynthesis via DAP pathway; LL-2,6-diaminopimelate from (S)-tetrahydrodipicolinate (succinylase route): step 3/3. In terms of biological role, catalyzes the hydrolysis of N-succinyl-L,L-diaminopimelic acid (SDAP), forming succinate and LL-2,6-diaminopimelate (DAP), an intermediate involved in the bacterial biosynthesis of lysine and meso-diaminopimelic acid, an essential component of bacterial cell walls. The protein is Succinyl-diaminopimelate desuccinylase of Escherichia coli O17:K52:H18 (strain UMN026 / ExPEC).